The sequence spans 158 residues: Endoribonuclease YbeY (158 aa).

Residues histidine 119, histidine 123, and histidine 129 each coordinate Zn(2+).

Belongs to the endoribonuclease YbeY family. Zn(2+) is required as a cofactor.

The protein localises to the cytoplasm. Its function is as follows. Single strand-specific metallo-endoribonuclease involved in late-stage 70S ribosome quality control and in maturation of the 3' terminus of the 16S rRNA. This chain is Endoribonuclease YbeY, found in Acinetobacter baumannii (strain AB307-0294).